A 157-amino-acid polypeptide reads, in one-letter code: Mitochondrial inner membrane protease subunit 1 (157 aa).

Active-site residues include Ser-35 and Lys-80.

The protein belongs to the peptidase S26 family. IMP1 subfamily. As to quaternary structure, heterodimer of 2 subunits, imp1 and imp2.

The protein resides in the mitochondrion inner membrane. Catalyzes the removal of transit peptides required for the targeting of proteins from the mitochondrial matrix, across the inner membrane, into the inter-membrane space. The chain is Mitochondrial inner membrane protease subunit 1 (imp1) from Schizosaccharomyces pombe (strain 972 / ATCC 24843) (Fission yeast).